A 293-amino-acid polypeptide reads, in one-letter code: Pyridoxal 5'-phosphate synthase subunit PdxS (293 aa).

Aspartate 23 serves as a coordination point for D-ribose 5-phosphate. Lysine 80 (schiff-base intermediate with D-ribose 5-phosphate) is an active-site residue. A D-ribose 5-phosphate-binding site is contributed by glycine 152. Residue arginine 164 participates in D-glyceraldehyde 3-phosphate binding. D-ribose 5-phosphate is bound by residues glycine 213 and 234 to 235; that span reads GS.

This sequence belongs to the PdxS/SNZ family. As to quaternary structure, in the presence of PdxT, forms a dodecamer of heterodimers.

The catalysed reaction is aldehydo-D-ribose 5-phosphate + D-glyceraldehyde 3-phosphate + L-glutamine = pyridoxal 5'-phosphate + L-glutamate + phosphate + 3 H2O + H(+). It participates in cofactor biosynthesis; pyridoxal 5'-phosphate biosynthesis. Catalyzes the formation of pyridoxal 5'-phosphate from ribose 5-phosphate (RBP), glyceraldehyde 3-phosphate (G3P) and ammonia. The ammonia is provided by the PdxT subunit. Can also use ribulose 5-phosphate and dihydroxyacetone phosphate as substrates, resulting from enzyme-catalyzed isomerization of RBP and G3P, respectively. This chain is Pyridoxal 5'-phosphate synthase subunit PdxS, found in Chloroflexus aurantiacus (strain ATCC 29366 / DSM 635 / J-10-fl).